We begin with the raw amino-acid sequence, 472 residues long: Nuclear receptor subfamily 0 group B member 1 (472 aa).

A run of 3 repeats spans residues 1–67 (MAGE…YRCC), 68–135 (FCGE…YRCC), and 136–202 (FCGE…YRSY). A 4 X 67 AA tandem repeats region spans residues 1-255 (MAGEDHPWQG…RLITLKDPQV (255 aa)). 3 consecutive short sequence motifs (LXXLL motif) follow at residues 13-17 (LYNLL), 80-84 (LYSML), and 148-152 (LYSLL). The region spanning 190–471 (QSTQAMAFLY…DMMLEMLCAK (282 aa)) is the NR LBD domain. One copy of the 4; truncated repeat lies at 203–255 (VCGEEQPQQISVASGTPVSADQTPATPQEQPRAPWWDASPGVQRLITLKDPQV). Residues 214–231 (VASGTPVSADQTPATPQE) show a composition bias toward polar residues. Disordered stretches follow at residues 214 to 238 (VASG…APWW) and 324 to 343 (TTRR…ATEQ). Positions 463–468 (MMLEML) match the AF-2 motif motif.

Belongs to the nuclear hormone receptor family. NR0 subfamily. Homodimer. Interacts with NR5A1, NR5A2, NR0B2 and with COPS2. Interacts with ESRRB; represses ESRRB activity at the GATA6 promoter. Expressed in adult cerebral cortex, spinal cord, thymus, heart, lung, ovary, testis, adrenal gland, hypothalamus, spleen and kidney.

It is found in the nucleus. The protein resides in the cytoplasm. Its function is as follows. Nuclear receptor that lacks a DNA-binding domain and acts as a corepressor that inhibits the transcriptional activity of other nuclear receptors through heterodimeric interactions. Component of a cascade required for the development of the hypothalamic-pituitary-adrenal-gonadal axis. May also have a role in the development of the embryo and in the maintenance of embryonic stem cell pluripotency. The sequence is that of Nuclear receptor subfamily 0 group B member 1 (Nr0b1) from Mus musculus (Mouse).